The following is a 701-amino-acid chain: MVKCGKYVLILELLLLTLLYNLIKRVSNSGETVSSFVDGYNWNIMERWKAITPKEKLEYKVNYDLGLDIDAEIGDFGDYNSDVKTDLILFKYDKTTMISTIFVYIFSPSENKFIYHTEAKLEGKIVNLMVIDLNFDGSLDALVLFKDNSSQDKFYISTFIQNENDELEEKFNTKKKETENETISDFEDQNFYFTNIHPLLCDINNDGLPDLIAQHPNKSKSFSRFIWINDGDGGFKSILWENLNIFEYTDISEISNPNSSAIVDLNGDCKADLVFTVINKKNTKRIFLEIWINKIVDGKSLYVKADEDYMLPANSMQILFADFNADGSIDMVVPTCVKSSSCNYCCTSDDKIYFIPNIQTKICENSWTKNEDNKCRLASNLCSESDFEFAKKLSPDYISLLDDKGLHFSGDASYPSYLSVGDVDDDGYLDLLVSLRNDKGQKFVRIYKNEQISNNEQNHTDIRRFYNYYQFISSLEESTPDVYNAAFFDIFENGILDVIIFGTYNSNSKIKKYSSVGFVRSNETDSLFLKSTALNGICVNDCYKEKDKISTKTLGGNAHGPTFKITVIDANGTKSSKIGIQKSQSAHSPLQLPYVLFGLGRTSNYVEEFYVGMPTHEHSYYNMWVSIIPNSHIIVIPYPLDDSNKWQIQLSVNPSNKFYSIIYITLICLSVIGVLIFILDRKEKIEDSKEEMGFKSHFVIG.

The first 29 residues, 1 to 29 (MVKCGKYVLILELLLLTLLYNLIKRVSNS), serve as a signal peptide directing secretion. Residues 30 to 657 (GETVSSFVDG…IQLSVNPSNK (628 aa)) lie on the Extracellular side of the membrane. 7 N-linked (GlcNAc...) asparagine glycosylation sites follow: Asn148, Asn180, Asn217, Asn258, Asn458, Asn522, and Asn571. A helical transmembrane segment spans residues 658–678 (FYSIIYITLICLSVIGVLIFI). Residues 679 to 701 (LDRKEKIEDSKEEMGFKSHFVIG) lie on the Cytoplasmic side of the membrane.

The protein belongs to the TIP family.

It localises to the membrane. Its function is as follows. May protect the parasite against attack by the host immune system by immunomodulation. The polypeptide is T-cell immunomodulatory protein homolog (Plasmodium yoelii yoelii).